Here is a 379-residue protein sequence, read N- to C-terminus: Cytochrome b (379 aa).

Helical transmembrane passes span 33 to 53 (FGSL…FLAM), 77 to 98 (WLIR…FIHV), 113 to 133 (WNIG…GYVL), and 178 to 198 (FFAF…VHLL). Heme b is bound by residues histidine 83 and histidine 97. Heme b-binding residues include histidine 182 and histidine 196. Histidine 201 lines the a ubiquinone pocket. 4 helical membrane-spanning segments follow: residues 226-246 (TKDL…ALFF), 288-308 (LGGV…PLLN), 320-340 (VTQI…WIGG), and 347-367 (FTTI…ILIP).

Belongs to the cytochrome b family. In terms of assembly, the cytochrome bc1 complex contains 11 subunits: 3 respiratory subunits (MT-CYB, CYC1 and UQCRFS1), 2 core proteins (UQCRC1 and UQCRC2) and 6 low-molecular weight proteins (UQCRH/QCR6, UQCRB/QCR7, UQCRQ/QCR8, UQCR10/QCR9, UQCR11/QCR10 and a cleavage product of UQCRFS1). This cytochrome bc1 complex then forms a dimer. It depends on heme b as a cofactor.

Its subcellular location is the mitochondrion inner membrane. Component of the ubiquinol-cytochrome c reductase complex (complex III or cytochrome b-c1 complex) that is part of the mitochondrial respiratory chain. The b-c1 complex mediates electron transfer from ubiquinol to cytochrome c. Contributes to the generation of a proton gradient across the mitochondrial membrane that is then used for ATP synthesis. This Akodon reigi (Reig's grass mouse) protein is Cytochrome b (MT-CYB).